A 151-amino-acid polypeptide reads, in one-letter code: S-protein homolog 27 (151 aa).

2 N-linked (GlcNAc...) asparagine glycosylation sites follow: asparagine 91 and asparagine 123.

This sequence belongs to the plant self-incompatibility (S1) protein family.

The protein resides in the secreted. The polypeptide is S-protein homolog 27 (Arabidopsis thaliana (Mouse-ear cress)).